A 375-amino-acid polypeptide reads, in one-letter code: Succinyl-diaminopimelate desuccinylase (375 aa).

His-66 contributes to the Zn(2+) binding site. Residue Asp-68 is part of the active site. Zn(2+) is bound at residue Asp-99. Glu-133 acts as the Proton acceptor in catalysis. Residues Glu-134, Glu-162, and His-348 each contribute to the Zn(2+) site.

The protein belongs to the peptidase M20A family. DapE subfamily. Homodimer. It depends on Zn(2+) as a cofactor. The cofactor is Co(2+).

It catalyses the reaction N-succinyl-(2S,6S)-2,6-diaminopimelate + H2O = (2S,6S)-2,6-diaminopimelate + succinate. It participates in amino-acid biosynthesis; L-lysine biosynthesis via DAP pathway; LL-2,6-diaminopimelate from (S)-tetrahydrodipicolinate (succinylase route): step 3/3. Its function is as follows. Catalyzes the hydrolysis of N-succinyl-L,L-diaminopimelic acid (SDAP), forming succinate and LL-2,6-diaminopimelate (DAP), an intermediate involved in the bacterial biosynthesis of lysine and meso-diaminopimelic acid, an essential component of bacterial cell walls. The polypeptide is Succinyl-diaminopimelate desuccinylase (Erwinia tasmaniensis (strain DSM 17950 / CFBP 7177 / CIP 109463 / NCPPB 4357 / Et1/99)).